The primary structure comprises 137 residues: Fatty acid-binding protein homolog 8 (137 aa).

The short motif at 24-34 (KEIGVGLLIRK) is the Nuclear localization signal element.

The protein belongs to the calycin superfamily. Fatty-acid binding protein (FABP) family. Monomer. Intestine.

It is found in the lysosome. The protein localises to the nucleus. Functionally, lysosomal lipid chaperone which binds to a wide range of unsaturated fatty acids, including high affinity binding to oleic acid and oleoylethanolamide, to transport them into the nucleus. As part of a lysosome-to-nucleus retrograde lipid signaling pathway, translocates into the nucleus where it activates the transcription of genes promoting longevity and activation of mitochondrial beta oxidation. The chain is Fatty acid-binding protein homolog 8 from Caenorhabditis elegans.